The sequence spans 377 residues: LIM/homeobox protein Lhx9 (377 aa).

2 LIM zinc-binding domains span residues 50 to 111 (ALCA…RFSV) and 112 to 174 (QRCA…LVQG). Disordered stretches follow at residues 228–249 (NEND…QKTK), 309–346 (RQEN…TDLT), and 358–377 (SSLD…TNLF). The homeobox DNA-binding region spans 248–307 (TKXMRTSFKHHQLRTMKSYFAINHNPDAKDLKQLAQKTGLTKRVLQVWFQNARAKFRRNV). Over residues 333-346 (LTPPSTATTLTDLT) the composition is skewed to low complexity. Over residues 365 to 377 (SGSPPQTTLTNLF) the composition is skewed to polar residues.

It is found in the nucleus. Its function is as follows. May be involved in gonadal development. This is LIM/homeobox protein Lhx9 (lhx9) from Psalidodon fasciatus (Banded astyanax).